The primary structure comprises 359 residues: Protein-arginine kinase (359 aa).

The region spanning isoleucine 25–leucine 257 is the Phosphagen kinase C-terminal domain. Residues serine 28–arginine 32, histidine 93, arginine 128, arginine 179–methionine 183, and arginine 210–glutamate 215 contribute to the ATP site. The short motif at arginine 340–alanine 345 is the RDXXRA motif of the pArg binding pocket involved in allosteric regulation element.

Belongs to the ATP:guanido phosphotransferase family.

The enzyme catalyses L-arginyl-[protein] + ATP = N(omega)-phospho-L-arginyl-[protein] + ADP + H(+). Appears to be allosterically activated by the binding of pArg-containing polypeptides to the pArg-binding pocket localized in the C-terminal domain of McsB. Catalyzes the specific phosphorylation of arginine residues in proteins. This chain is Protein-arginine kinase, found in Syntrophomonas wolfei subsp. wolfei (strain DSM 2245B / Goettingen).